The chain runs to 275 residues: 4-hydroxy-3-methylbut-2-enyl diphosphate reductase (275 aa).

Cys-12 is a binding site for [4Fe-4S] cluster. (2E)-4-hydroxy-3-methylbut-2-enyl diphosphate contacts are provided by His-36 and His-70. Positions 36 and 70 each coordinate dimethylallyl diphosphate. His-36 and His-70 together coordinate isopentenyl diphosphate. Residue Cys-92 coordinates [4Fe-4S] cluster. His-120 lines the (2E)-4-hydroxy-3-methylbut-2-enyl diphosphate pocket. His-120 contacts dimethylallyl diphosphate. His-120 serves as a coordination point for isopentenyl diphosphate. Glu-122 functions as the Proton donor in the catalytic mechanism. Residue Thr-158 participates in (2E)-4-hydroxy-3-methylbut-2-enyl diphosphate binding. Residue Cys-186 coordinates [4Fe-4S] cluster. Residues Ser-214, Ser-215, Asn-216, and Ser-258 each contribute to the (2E)-4-hydroxy-3-methylbut-2-enyl diphosphate site. The dimethylallyl diphosphate site is built by Ser-214, Ser-215, Asn-216, and Ser-258. Isopentenyl diphosphate-binding residues include Ser-214, Ser-215, Asn-216, and Ser-258.

It belongs to the IspH family. It depends on [4Fe-4S] cluster as a cofactor.

It catalyses the reaction isopentenyl diphosphate + 2 oxidized [2Fe-2S]-[ferredoxin] + H2O = (2E)-4-hydroxy-3-methylbut-2-enyl diphosphate + 2 reduced [2Fe-2S]-[ferredoxin] + 2 H(+). It carries out the reaction dimethylallyl diphosphate + 2 oxidized [2Fe-2S]-[ferredoxin] + H2O = (2E)-4-hydroxy-3-methylbut-2-enyl diphosphate + 2 reduced [2Fe-2S]-[ferredoxin] + 2 H(+). The protein operates within isoprenoid biosynthesis; dimethylallyl diphosphate biosynthesis; dimethylallyl diphosphate from (2E)-4-hydroxy-3-methylbutenyl diphosphate: step 1/1. It functions in the pathway isoprenoid biosynthesis; isopentenyl diphosphate biosynthesis via DXP pathway; isopentenyl diphosphate from 1-deoxy-D-xylulose 5-phosphate: step 6/6. In terms of biological role, catalyzes the conversion of 1-hydroxy-2-methyl-2-(E)-butenyl 4-diphosphate (HMBPP) into a mixture of isopentenyl diphosphate (IPP) and dimethylallyl diphosphate (DMAPP). Acts in the terminal step of the DOXP/MEP pathway for isoprenoid precursor biosynthesis. The sequence is that of 4-hydroxy-3-methylbut-2-enyl diphosphate reductase from Campylobacter hominis (strain ATCC BAA-381 / DSM 21671 / CCUG 45161 / LMG 19568 / NCTC 13146 / CH001A).